Here is an 87-residue protein sequence, read N- to C-terminus: UPF0367 protein P9211_01391 (87 aa).

Belongs to the UPF0367 family.

The chain is UPF0367 protein P9211_01391 from Prochlorococcus marinus (strain MIT 9211).